The chain runs to 575 residues: UvrABC system protein C (575 aa).

In terms of domain architecture, GIY-YIG spans 16 to 94; the sequence is SQPGVYRMYD…IKLYQPRYNV (79 aa). One can recognise a UVR domain in the interval 204–239; the sequence is DQVLTQLISRMETASQNLEFEEAARIRDQIQAVRRV.

The protein belongs to the UvrC family. In terms of assembly, interacts with UvrB in an incision complex.

Its subcellular location is the cytoplasm. Its function is as follows. The UvrABC repair system catalyzes the recognition and processing of DNA lesions. UvrC both incises the 5' and 3' sides of the lesion. The N-terminal half is responsible for the 3' incision and the C-terminal half is responsible for the 5' incision. This chain is UvrABC system protein C, found in Shigella dysenteriae serotype 1 (strain Sd197).